The following is a 706-amino-acid chain: MVNFSNKLTKDQIPGWEEYYFNYKMLKGRVNEYTEQTKEGTQYRRRVLKDFSKLLDDEIEKIVLFMIEQQGLIAARLEDLGKRRARLQDIPLLQEITELREDYRSVGLDLVTLLKFVELNANAVRKILKKFDERLGYKFTDYYVRSRSNHPYSQLQQVFRHVGIGAVVGALSRNLSDLEERQGSYLNIYDQHPLAIPKDPIIDLITATADKLTNSTNFLRFLGQHALIAQADSTAGTEDEQHVGEDKYHLMSLVLNLANTFLYMVNTYIVVPTADGYATSLGAAATACGAVIGSMAVAQVFSSVYFSAWSNRSYFRPLLFSSVVLLLGNVMYAMAFDLGSLTILLLGRVLCGMGSARAVNRRYISDCVPPRIRMQASAAFVSASALGMACGPALAGLLQTNFSLYGLTINQITLPGWIMAFGWLVYLIWLWISFQEPDLGPDAKDFYEGSSSSTSTRYMEQEKMEQGFTEHLLPSEQDEEDDNGDEEHNETLSSSTTTLRPASSVASAYTLLTPSVKVQLLIYFMLKYAMEILLAESSVVTGYYFGWDIGTVSVFLAVLGLSVLPVNAIVGTYISNMFEDRQILVASEMALLAGVMLSFKLTVEYTAAQYVCSAVLTFVSAEVVEGVNLSLLSRVMSARLSRGTYNGGLLSTEAGTVARVVADGTITAAGLLAGEGRLLNATLLPALLVCVASIAATLSTYNSLFY.

Residues 2–145 (VNFSNKLTKD…GYKFTDYYVR (144 aa)) form the SPX domain. Transmembrane regions (helical) follow at residues 251–271 (MSLV…YIVV), 281–301 (LGAA…AQVF), 318–338 (LLFS…AFDL), 340–359 (SLTI…ARAV), 378–398 (AAFV…AGLL), and 414–434 (LPGW…WISF). Positions 475–498 (SEQDEEDDNGDEEHNETLSSSTTT) are disordered. Acidic residues predominate over residues 476–488 (EQDEEDDNGDEEH). A run of 5 helical transmembrane segments spans residues 520–540 (LLIY…SSVV), 554–574 (VFLA…GTYI), 583–603 (ILVA…KLTV), 611–631 (VCSA…NLSL), and 678–698 (LLNA…AATL).

It belongs to the major facilitator superfamily.

The protein localises to the membrane. This chain is SPX domain-containing membrane protein OsI_32082, found in Oryza sativa subsp. indica (Rice).